A 251-amino-acid chain; its full sequence is Regulator of G-protein signaling 9-binding protein C (251 aa).

The Cytoplasmic portion of the chain corresponds to M1–Q230. Coiled-coil stretches lie at residues L53 to R94 and A158 to N187. The chain crosses the membrane as a helical; Anchor for type IV membrane protein span at residues L231 to I250. Position 251 (L251) is a topological domain, extracellular.

The protein belongs to the RGS7BP/RGS9BP family.

It is found in the membrane. Its function is as follows. Regulator of G protein-coupled receptor (GPCR) signaling. Probably acts by regulating the activity of some 'R7' family protein (RGS6, RGS7, RGS9 and/or RGS11). The protein is Regulator of G-protein signaling 9-binding protein C (rgs9bp-c) of Xenopus laevis (African clawed frog).